The primary structure comprises 294 residues: MHPRFQTAFAQLADNLQSALAPILADHHFPAMLAAEQVSTLKNATGLDEDALAFALLPLAAACARTDLSHFNVGAIARGVSGNWYFGANMEFLGATMQQTVHAEQSAISHAWLCGEKGLAAVTVNYTPCGHCRQFMNELNSGLDLRIHLPGRAPHTLRDYLPDAFGPKDLEIKTLLMDEQDHGFALTGDTLTQAAITAANKSHMPYSQSPSGVALECKDGRIFTGSYAENAAFNPTLPPLQGALNLLSLNGYDYPDIQRAILAEKGDAALIQWDATAATLKALGCHNIDRVLLG.

CMP/dCMP-type deaminase domains lie at 48 to 168 (DEDA…FGPK) and 186 to 294 (LTGD…VLLG). A substrate-binding site is contributed by 89-91 (NME). His102 lines the Zn(2+) pocket. The Proton donor role is filled by Glu104. The Zn(2+) site is built by Cys129 and Cys132.

The protein belongs to the cytidine and deoxycytidylate deaminase family. Homodimer. The cofactor is Zn(2+).

It carries out the reaction cytidine + H2O + H(+) = uridine + NH4(+). The catalysed reaction is 2'-deoxycytidine + H2O + H(+) = 2'-deoxyuridine + NH4(+). Functionally, this enzyme scavenges exogenous and endogenous cytidine and 2'-deoxycytidine for UMP synthesis. This chain is Cytidine deaminase, found in Salmonella arizonae (strain ATCC BAA-731 / CDC346-86 / RSK2980).